A 227-amino-acid chain; its full sequence is Cytochrome c oxidase subunit 2 (227 aa).

At 1 to 14 (MAYPFQLGLQDATS) the chain is on the mitochondrial intermembrane side. The chain crosses the membrane as a helical span at residues 15–45 (PIMEELLHFHDHTLMIVFLISSLVLYIITLM). Residues 46-59 (LTTKLTHTSTMDAQ) lie on the Mitochondrial matrix side of the membrane. A helical transmembrane segment spans residues 60-87 (EVETVWTILPAIILVLIALPSLRILYMM). Residues 88 to 227 (DEINNPSLTV…YFETWSALMV (140 aa)) are Mitochondrial intermembrane-facing. Residues His-161, Cys-196, Glu-198, Cys-200, His-204, and Met-207 each coordinate Cu cation. Glu-198 provides a ligand contact to Mg(2+). Position 218 is a phosphotyrosine (Tyr-218).

The protein belongs to the cytochrome c oxidase subunit 2 family. As to quaternary structure, component of the cytochrome c oxidase (complex IV, CIV), a multisubunit enzyme composed of 14 subunits. The complex is composed of a catalytic core of 3 subunits MT-CO1, MT-CO2 and MT-CO3, encoded in the mitochondrial DNA, and 11 supernumerary subunits COX4I, COX5A, COX5B, COX6A, COX6B, COX6C, COX7A, COX7B, COX7C, COX8 and NDUFA4, which are encoded in the nuclear genome. The complex exists as a monomer or a dimer and forms supercomplexes (SCs) in the inner mitochondrial membrane with NADH-ubiquinone oxidoreductase (complex I, CI) and ubiquinol-cytochrome c oxidoreductase (cytochrome b-c1 complex, complex III, CIII), resulting in different assemblies (supercomplex SCI(1)III(2)IV(1) and megacomplex MCI(2)III(2)IV(2)). Found in a complex with TMEM177, COA6, COX18, COX20, SCO1 and SCO2. Interacts with TMEM177 in a COX20-dependent manner. Interacts with COX20. Interacts with COX16. Requires Cu cation as cofactor.

It localises to the mitochondrion inner membrane. The catalysed reaction is 4 Fe(II)-[cytochrome c] + O2 + 8 H(+)(in) = 4 Fe(III)-[cytochrome c] + 2 H2O + 4 H(+)(out). In terms of biological role, component of the cytochrome c oxidase, the last enzyme in the mitochondrial electron transport chain which drives oxidative phosphorylation. The respiratory chain contains 3 multisubunit complexes succinate dehydrogenase (complex II, CII), ubiquinol-cytochrome c oxidoreductase (cytochrome b-c1 complex, complex III, CIII) and cytochrome c oxidase (complex IV, CIV), that cooperate to transfer electrons derived from NADH and succinate to molecular oxygen, creating an electrochemical gradient over the inner membrane that drives transmembrane transport and the ATP synthase. Cytochrome c oxidase is the component of the respiratory chain that catalyzes the reduction of oxygen to water. Electrons originating from reduced cytochrome c in the intermembrane space (IMS) are transferred via the dinuclear copper A center (CU(A)) of subunit 2 and heme A of subunit 1 to the active site in subunit 1, a binuclear center (BNC) formed by heme A3 and copper B (CU(B)). The BNC reduces molecular oxygen to 2 water molecules using 4 electrons from cytochrome c in the IMS and 4 protons from the mitochondrial matrix. In Vulpes zerda (Fennec fox), this protein is Cytochrome c oxidase subunit 2 (MT-CO2).